The chain runs to 487 residues: NADH-quinone oxidoreductase subunit N (487 aa).

14 helical membrane passes run V16–F36, L45–G65, N79–S99, G111–T131, L133–F153, F168–V188, L212–F232, A257–A276, L281–L298, M306–T326, I333–L353, A378–I398, I413–V435, and L457–L477.

This sequence belongs to the complex I subunit 2 family. NDH-1 is composed of 14 different subunits. Subunits NuoA, H, J, K, L, M, N constitute the membrane sector of the complex.

It is found in the cell inner membrane. The catalysed reaction is a quinone + NADH + 5 H(+)(in) = a quinol + NAD(+) + 4 H(+)(out). NDH-1 shuttles electrons from NADH, via FMN and iron-sulfur (Fe-S) centers, to quinones in the respiratory chain. The immediate electron acceptor for the enzyme in this species is believed to be ubiquinone. Couples the redox reaction to proton translocation (for every two electrons transferred, four hydrogen ions are translocated across the cytoplasmic membrane), and thus conserves the redox energy in a proton gradient. The sequence is that of NADH-quinone oxidoreductase subunit N from Trichlorobacter lovleyi (strain ATCC BAA-1151 / DSM 17278 / SZ) (Geobacter lovleyi).